The following is a 109-amino-acid chain: uncharacterized protein (109 aa).

It is found in the mitochondrion. This is an uncharacterized protein from Saccharomyces cerevisiae (strain ATCC 204508 / S288c) (Baker's yeast).